A 102-amino-acid polypeptide reads, in one-letter code: Monothiol glutaredoxin-S6 (102 aa).

The Glutaredoxin domain occupies 1–101 (MESVRSLVED…AMLRRAGAIW (101 aa)). Position 21 (cysteine 21) interacts with [2Fe-2S] cluster.

The protein belongs to the glutaredoxin family. CC-type subfamily.

The protein localises to the cytoplasm. In terms of biological role, may only reduce GSH-thiol disulfides, but not protein disulfides. In Arabidopsis thaliana (Mouse-ear cress), this protein is Monothiol glutaredoxin-S6 (GRXS6).